A 165-amino-acid chain; its full sequence is Putative inactive neutral ceramidase B (165 aa).

Belongs to the neutral ceramidase family. Ubiquitous. Expression is reduced with increasing age and in late-onset Alzheimer disease (LOAD) patients. This reduction is even more pronounced in patients with an affected mother.

The protein is Putative inactive neutral ceramidase B of Homo sapiens (Human).